A 419-amino-acid chain; its full sequence is MEQTPLTYLKQQDEELFSAMRKELKRQRDNIELIASENFVSQAVMEAQGSVLTNKYAEGYPGRRYYGGCEFVDLAENLARDRAKAIFGAEHVNVQPHSGAQANMAVYFTILNQGDTVLGMNLSHGGHLTHGSPVNFSGVQYNFVEYGVDPETEMIDYDVVAKLAEEHKPKLIVAGASAYPRVIDFKRFREIADSVGAYLMVDMAHIAGLVAAGLHPNPVEHAHFVTTTTHKTLRGPRGGMILCKEEHAKAIDKSIFPGIQGGPLMHVIAAKAVAFAEALAPEFKDYIEQVVANAKVLGEELTARGLRIVSGGTDNHLLLVDLQPLGITGKLAEHALDEAGITVNKNTIPFDPASPFVTSGIRIGTAAMTSRGFKEAEMKQIAELIELVLKNPEDQETLTSAHKQVLALTGRFPLYPERG.

(6S)-5,6,7,8-tetrahydrofolate is bound by residues L122 and 126–128 (GHL). Residue K231 is modified to N6-(pyridoxal phosphate)lysine. Residue 354–356 (SPF) coordinates (6S)-5,6,7,8-tetrahydrofolate.

Belongs to the SHMT family. As to quaternary structure, homodimer. Requires pyridoxal 5'-phosphate as cofactor.

The protein localises to the cytoplasm. It catalyses the reaction (6R)-5,10-methylene-5,6,7,8-tetrahydrofolate + glycine + H2O = (6S)-5,6,7,8-tetrahydrofolate + L-serine. The protein operates within one-carbon metabolism; tetrahydrofolate interconversion. Its pathway is amino-acid biosynthesis; glycine biosynthesis; glycine from L-serine: step 1/1. Functionally, catalyzes the reversible interconversion of serine and glycine with tetrahydrofolate (THF) serving as the one-carbon carrier. This reaction serves as the major source of one-carbon groups required for the biosynthesis of purines, thymidylate, methionine, and other important biomolecules. Also exhibits THF-independent aldolase activity toward beta-hydroxyamino acids, producing glycine and aldehydes, via a retro-aldol mechanism. In Exiguobacterium sibiricum (strain DSM 17290 / CCUG 55495 / CIP 109462 / JCM 13490 / 255-15), this protein is Serine hydroxymethyltransferase.